A 157-amino-acid chain; its full sequence is Peptide methionine sulfoxide reductase MsrA (157 aa).

Cys-10 is a catalytic residue.

The protein belongs to the MsrA Met sulfoxide reductase family.

It carries out the reaction L-methionyl-[protein] + [thioredoxin]-disulfide + H2O = L-methionyl-(S)-S-oxide-[protein] + [thioredoxin]-dithiol. It catalyses the reaction [thioredoxin]-disulfide + L-methionine + H2O = L-methionine (S)-S-oxide + [thioredoxin]-dithiol. Has an important function as a repair enzyme for proteins that have been inactivated by oxidation. Catalyzes the reversible oxidation-reduction of methionine sulfoxide in proteins to methionine. This Clostridium perfringens (strain SM101 / Type A) protein is Peptide methionine sulfoxide reductase MsrA.